The sequence spans 1303 residues: D-lysergyl-peptide-synthetase subunit 2 (1303 aa).

The tract at residues 256-653 (EWCRWTPSAV…CRKSTQVKLR (398 aa)) is adenylation (A) domain. The Carrier domain occupies 793-869 (APSNDIEEAF…ELARHTKLVA (77 aa)). The residue at position 830 (S830) is an O-(pantetheine 4'-phosphoryl)serine. The tract at residues 905 to 1294 (EDVYPCTPLQ…HAAPRTLIGD (390 aa)) is condensation (C) domain.

The protein belongs to the NRP synthetase family.

The protein operates within alkaloid biosynthesis; ergot alkaloid biosynthesis. D-lysergyl-peptide-synthetase subunit 2; part of the gene cluster that mediates the biosynthesis of fungal ergot alkaloid. DmaW catalyzes the first step of ergot alkaloid biosynthesis by condensing dimethylallyl diphosphate (DMAP) and tryptophan to form 4-dimethylallyl-L-tryptophan. The second step is catalyzed by the methyltransferase easF that methylates 4-dimethylallyl-L-tryptophan in the presence of S-adenosyl-L-methionine, resulting in the formation of 4-dimethylallyl-L-abrine. The catalase easC and the FAD-dependent oxidoreductase easE then transform 4-dimethylallyl-L-abrine to chanoclavine-I which is further oxidized by easD in the presence of NAD(+), resulting in the formation of chanoclavine-I aldehyde. Agroclavine dehydrogenase easG then mediates the conversion of chanoclavine-I aldehyde to agroclavine via a non-enzymatic adduct reaction: the substrate is an iminium intermediate that is formed spontaneously from chanoclavine-I aldehyde in the presence of glutathione. The presence of easA is not required to complete this reaction. Further conversion of agroclavine to paspalic acid is a two-step process involving oxidation of agroclavine to elymoclavine and of elymoclavine to paspalic acid, the second step being performed by the elymoclavine oxidase cloA. Paspalic acid is then further converted to D-lysergic acid. Ergopeptines are assembled from D-lysergic acid and three different amino acids by the D-lysergyl-peptide-synthetases composed each of a monomudular and a trimodular nonribosomal peptide synthetase subunit. LpsB and lpsC encode the monomodular subunits responsible for D-lysergic acid activation and incorporation into the ergopeptine backbone. LpsA1 and A2 subunits encode the trimodular nonribosomal peptide synthetase assembling the tripeptide portion of ergopeptines. LpsA1 is responsible for formation of the major ergopeptine, ergotamine, and lpsA2 for alpha-ergocryptine, the minor ergopeptine of the total alkaloid mixture elaborated by C.purpurea. D-lysergyl-tripeptides are assembled by the nonribosomal peptide synthetases and released as N-(D-lysergyl-aminoacyl)-lactams. Cyclolization of the D-lysergyl-tripeptides is performed by the Fe(2+)/2-ketoglutarate-dependent dioxygenase easH which introduces a hydroxyl group into N-(D-lysergyl-aminoacyl)-lactam at alpha-C of the aminoacyl residue followed by spontaneous condensation with the terminal lactam carbonyl group. This chain is D-lysergyl-peptide-synthetase subunit 2, found in Claviceps purpurea (strain 20.1) (Ergot fungus).